The sequence spans 767 residues: Lysyl oxidase homolog 2 (767 aa).

A signal peptide spans M1 to G19. 4 consecutive SRCR domains span residues V51–S152, I181–T295, V319–N418, and V428–V537. 9 disulfide bridges follow: C77-C141, C90-C151, C121-C131, C211-C284, C224-C294, C258-C268, C344-C407, C357-C417, and C388-C398. N281 is a glycosylation site (N-linked (GlcNAc...) asparagine). A glycan (N-linked (GlcNAc...) asparagine) is linked at N448. 3 disulfides stabilise this stretch: C457–C523, C470–C536, and C504–C514. A lysyl-oxidase like region spans residues P541–S744. D542 and L543 together coordinate Ca(2+). 4 cysteine pairs are disulfide-bonded: C566-C618, C572-C688, C650-C666, and C656-C678. Positions 619, 621, and 623 each coordinate Cu cation. N637 carries N-linked (GlcNAc...) asparagine glycosylation. Residues K646–Y682 constitute a cross-link (lysine tyrosylquinone (Lys-Tyr)). Y682 carries the 2',4',5'-topaquinone modification. The Ca(2+) site is built by E715, D717, N720, and N721. Residues C725 and C739 are joined by a disulfide bond.

This sequence belongs to the lysyl oxidase family. Cu cation is required as a cofactor. It depends on lysine tyrosylquinone residue as a cofactor. Post-translationally, the lysine tyrosylquinone cross-link (LTQ) is generated by condensation of the epsilon-amino group of a lysine with a topaquinone produced by oxidation of tyrosine.

It localises to the secreted. It is found in the extracellular space. The protein resides in the extracellular matrix. The protein localises to the basement membrane. Its subcellular location is the nucleus. It localises to the chromosome. It is found in the endoplasmic reticulum. It catalyses the reaction L-lysyl-[protein] + O2 + H2O = (S)-2-amino-6-oxohexanoyl-[protein] + H2O2 + NH4(+). Functionally, mediates the post-translational oxidative deamination of lysine residues on target proteins leading to the formation of deaminated lysine (allysine). Acts as a transcription corepressor and specifically mediates deamination of trimethylated 'Lys-4' of histone H3 (H3K4me3), a specific tag for epigenetic transcriptional activation. Shows no activity against histone H3 when it is trimethylated on 'Lys-9' (H3K9me3) or 'Lys-27' (H3K27me3) or when 'Lys-4' is monomethylated (H3K4me1) or dimethylated (H3K4me2). Also mediates deamination of methylated TAF10, a member of the transcription factor IID (TFIID) complex, which induces release of TAF10 from promoters, leading to inhibition of TFIID-dependent transcription. LOXL2-mediated deamination of TAF10 results in transcriptional repression of genes required for embryonic stem cell pluripotency. Involved in epithelial to mesenchymal transition (EMT) and participates in repression of E-cadherin, probably by mediating deamination of histone H3. When secreted into the extracellular matrix, promotes cross-linking of extracellular matrix proteins by mediating oxidative deamination of peptidyl lysine residues in precursors to fibrous collagen and elastin. Acts as a regulator of sprouting angiogenesis, probably via collagen IV scaffolding. Acts as a regulator of chondrocyte differentiation, probably by regulating expression of factors that control chondrocyte differentiation. This is Lysyl oxidase homolog 2 (loxl2) from Xenopus tropicalis (Western clawed frog).